A 332-amino-acid polypeptide reads, in one-letter code: Glyceraldehyde-3-phosphate dehydrogenase 1 (332 aa).

NAD(+) contacts are provided by arginine 11, isoleucine 12, aspartate 33, and threonine 120. D-glyceraldehyde 3-phosphate is bound by residues 149–151, threonine 180, 209–210, and arginine 232; these read SCT and TG. Cysteine 150 acts as the Nucleophile in catalysis. NAD(+) contacts are provided by asparagine 314 and tyrosine 318.

The protein belongs to the glyceraldehyde-3-phosphate dehydrogenase family. Homotetramer.

It localises to the cytoplasm. It carries out the reaction D-glyceraldehyde 3-phosphate + phosphate + NAD(+) = (2R)-3-phospho-glyceroyl phosphate + NADH + H(+). It catalyses the reaction NADH + H2O = (6R)-NADHX. The catalysed reaction is NADH + H2O = (6S)-NADHX. The enzyme catalyses NADPH + H2O = (6R)-NADPHX. It carries out the reaction NADPH + H2O = (6S)-NADPHX. It participates in carbohydrate degradation; glycolysis; pyruvate from D-glyceraldehyde 3-phosphate: step 1/5. Its function is as follows. Glyceraldehyde-3-phosphate dehydrogenase (GAPDH) involved in glycolysis and gluconeogenesis. Catalyzes the reaction of glyceraldehyde-3-phosphate to 1,3 bis-phosphoglycerate. The contribution of the TDH1, TDH2, and TDH3 to the total glyceraldehyde-3-phosphate dehydrogenase activity is 10-15, 25-30, and 50-60%, respectively. May be involved in a process other than glycolysis because it is synthesized by cells in stationary phase. As a side activity, catalyzes the hydration of the nicotinamide ring of NADH or NADPH at the C6 position to give the corresponding hydrates, NADHX and NADPHX, which exist as R and S epimers, that cannot act as electron donors or acceptors and inhibit several dehydrogenases, making them toxic. This is Glyceraldehyde-3-phosphate dehydrogenase 1 from Saccharomyces cerevisiae (strain ATCC 204508 / S288c) (Baker's yeast).